A 1372-amino-acid chain; its full sequence is Polysaccharide lyase 8 family protein HylA (1372 aa).

Residues 1 to 25 (MIKKIIVVVAFMLTGFSLTAMSASA) form the signal peptide. The 110-residue stretch at 63–172 (DGDETTRWSA…SIISFEAYEK (110 aa)) folds into the F5/8 type C domain. The BIG2 domain occupies 183-242 (TENLTISEKRKQQLAFEVSPAGVDITEDQIEWSSSDPTIVTVDQTGNLTAVKSGEAKVTV). Residues His487, Tyr496, and Arg550 contribute to the active site. FIVAR domains follow at residues 1014–1075 (KEAL…VKQL), 1084–1146 (DKTN…VKQL), 1155–1217 (DKTN…VKQL), and 1226–1288 (DKTN…VKRL). The interval 1288–1336 (LTLKNSGENKKEQKNGGNNGHLNTSTGVDQTGTKQVKPSSQGGFRKASQ) is disordered. Positions 1308–1329 (HLNTSTGVDQTGTKQVKPSSQG) are enriched in polar residues. Residues 1338–1342 (LPSTG) carry the LPXTG sorting signal motif. Thr1341 bears the Pentaglycyl murein peptidoglycan amidated threonine mark. A propeptide spans 1342 to 1372 (GEKKSIALVIIGLLVIASGCLLVFRKSKSKK) (removed by sortase).

The protein belongs to the polysaccharide lyase 8 family.

The protein localises to the secreted. It localises to the cell wall. Functionally, has a very modest degradation activity against heparin sodium salt (HS) in vitro. Involved in the pathogenesis of vancomycin-resistant E.faecalis infections. The chain is Polysaccharide lyase 8 family protein HylA from Enterococcus faecalis (strain ATCC 700802 / V583).